We begin with the raw amino-acid sequence, 276 residues long: NH(3)-dependent NAD(+) synthetase (276 aa).

46–53 (GISGGQDS) contributes to the ATP binding site. Residue Asp-52 coordinates Mg(2+). Arg-141 lines the deamido-NAD(+) pocket. Thr-161 contacts ATP. Glu-166 contacts Mg(2+). 2 residues coordinate deamido-NAD(+): Lys-174 and Asp-181. Residues Lys-190 and Thr-212 each coordinate ATP. 261–262 (HK) is a deamido-NAD(+) binding site.

It belongs to the NAD synthetase family. As to quaternary structure, homodimer.

It carries out the reaction deamido-NAD(+) + NH4(+) + ATP = AMP + diphosphate + NAD(+) + H(+). The protein operates within cofactor biosynthesis; NAD(+) biosynthesis; NAD(+) from deamido-NAD(+) (ammonia route): step 1/1. Functionally, catalyzes the ATP-dependent amidation of deamido-NAD to form NAD. Uses ammonia as a nitrogen source. The chain is NH(3)-dependent NAD(+) synthetase from Limosilactobacillus fermentum (strain NBRC 3956 / LMG 18251) (Lactobacillus fermentum).